We begin with the raw amino-acid sequence, 177 residues long: Large ribosomal subunit protein uL6 (177 aa).

It belongs to the universal ribosomal protein uL6 family. In terms of assembly, part of the 50S ribosomal subunit.

In terms of biological role, this protein binds to the 23S rRNA, and is important in its secondary structure. It is located near the subunit interface in the base of the L7/L12 stalk, and near the tRNA binding site of the peptidyltransferase center. The polypeptide is Large ribosomal subunit protein uL6 (Idiomarina loihiensis (strain ATCC BAA-735 / DSM 15497 / L2-TR)).